A 449-amino-acid polypeptide reads, in one-letter code: UDP-N-acetylmuramoylalanine--D-glutamate ligase (449 aa).

An ATP-binding site is contributed by 118–124 (GTNGKTT).

It belongs to the MurCDEF family.

It localises to the cytoplasm. The catalysed reaction is UDP-N-acetyl-alpha-D-muramoyl-L-alanine + D-glutamate + ATP = UDP-N-acetyl-alpha-D-muramoyl-L-alanyl-D-glutamate + ADP + phosphate + H(+). It functions in the pathway cell wall biogenesis; peptidoglycan biosynthesis. Functionally, cell wall formation. Catalyzes the addition of glutamate to the nucleotide precursor UDP-N-acetylmuramoyl-L-alanine (UMA). The polypeptide is UDP-N-acetylmuramoylalanine--D-glutamate ligase (Staphylococcus aureus (strain MW2)).